We begin with the raw amino-acid sequence, 471 residues long: Adenosylhomocysteinase (471 aa).

Residues T60, D135, and E196 each contribute to the substrate site. 197 to 199 is a binding site for NAD(+); that stretch reads TTT. Positions 226 and 230 each coordinate substrate. NAD(+)-binding positions include N231, 260 to 265, E283, N318, 339 to 341, and N387; these read GYGDVG and IGH.

This sequence belongs to the adenosylhomocysteinase family. The cofactor is NAD(+).

Its subcellular location is the cytoplasm. The catalysed reaction is S-adenosyl-L-homocysteine + H2O = L-homocysteine + adenosine. The protein operates within amino-acid biosynthesis; L-homocysteine biosynthesis; L-homocysteine from S-adenosyl-L-homocysteine: step 1/1. Functionally, may play a key role in the regulation of the intracellular concentration of adenosylhomocysteine. The polypeptide is Adenosylhomocysteinase (Chlorobium limicola (strain DSM 245 / NBRC 103803 / 6330)).